A 1567-amino-acid chain; its full sequence is Ice nucleation protein (1567 aa).

Over residues 130–185 (PAAEPSAPATQATSATLPTPATPSTQATPSTQSTQSTQSTEATQSTEATPVATVAA) the composition is skewed to low complexity. Disordered stretches follow at residues 130–195 (PAAE…QQHD), 270–329 (YGST…KGSD), 356–378 (AGSE…GSDV), 449–474 (TQTS…GSDI), 502–529 (SESS…YGST), 594–620 (QTAG…DVTA), 642–668 (QTSG…DVTA), 689–716 (TQTS…DVTA), 738–764 (QTSG…DVTA), 785–810 (TQTS…GSDI), 833–860 (TQTS…DVTA), 929–959 (TQTS…AGYG), and 977–1004 (TQTS…DVTA). The segment covering 270–282 (YGSTQTAQEGSRL) has biased composition (polar residues). Residues 283-296 (TSGYGSTATSGSDS) show a composition bias toward low complexity. 4 stretches are compositionally biased toward polar residues: residues 302 to 325 (YGST…QTAR), 356 to 373 (AGSE…QTAR), 449 to 469 (TQTS…QTAR), and 502 to 519 (SESS…AQQD). A compositionally biased stretch (low complexity) spans 520-529 (SSLTTGYGST). Composition is skewed to polar residues over residues 594-613 (QTAG…QTAR), 642-661 (QTSG…QTAR), 689-709 (TQTS…QTAR), 738-757 (QTSG…QTAR), 785-805 (TQTS…QTAR), 833-853 (TQTS…QTAR), 929-949 (TQTS…QTAR), and 977-997 (TQTS…QTAR).

Belongs to the bacterial ice nucleation protein family.

Its subcellular location is the cell outer membrane. In terms of biological role, ice nucleation proteins enable bacteria to nucleate crystallization in supercooled water. The sequence is that of Ice nucleation protein (inaX) from Xanthomonas campestris pv. translucens.